The primary structure comprises 368 residues: Flavanone 3-dioxygenase (368 aa).

The Fe2OG dioxygenase domain maps to 191 to 295; sequence CVDMDQKVIV…RMSIATFQNP (105 aa). Residues His218, Asp220, and His276 each contribute to the Fe cation site. Residue Arg286 coordinates 2-oxoglutarate.

It belongs to the iron/ascorbate-dependent oxidoreductase family. It depends on Fe(2+) as a cofactor. The cofactor is L-ascorbate.

The enzyme catalyses a (2S)-flavan-4-one + 2-oxoglutarate + O2 = a (2R,3R)-dihydroflavonol + succinate + CO2. The protein operates within secondary metabolite biosynthesis; flavonoid biosynthesis. Involved in the conversion of (2S)-naringenin to (+)-(2R/3R)-dihydrokaempferol. This Petroselinum crispum (Parsley) protein is Flavanone 3-dioxygenase (FHT).